Consider the following 204-residue polypeptide: General stress protein Ctc (204 aa).

Residues 177–204 (ILPPQQQEAAEVDEEESADAQPEGENEQ) are disordered. The span at 186 to 204 (AEVDEEESADAQPEGENEQ) shows a compositional bias: acidic residues.

The protein belongs to the bacterial ribosomal protein bL25 family. CTC subfamily. Part of the ribosome (presumably the 50S subunit) under heat-stress but not control growth conditions. Binds 5S rRNA.

Not required for exponential growth; probably functions in vegetatively growing cells, maybe required for accurate translation under stress conditions. This is General stress protein Ctc from Bacillus subtilis (strain 168).